The chain runs to 445 residues: MKIRSTALVKGFRQSTPYVNAHRGKTMVILLGGEAIADKNFSNIINDIALMHSLGVKVVLVYGARPQINQLLDKQSSQTPYHKHIRVTDENSLSIVMQAAGQLQLAITASLSMSLNNTPMAGTHLNVVSGNFVIAQPLGIDEGVDYCHSGRIRRIDTEAINRSLDQGSIVLLGPIASSVTGECFNLLSEEVATQVAIKLKADKLIGFCSEQGVIDEEGNAVAELFPSDAEKFIQKLSVDVDPDSDFHSGTLRFLKGAVAACRAGVPRSHLISYKIDGALIQELFSFDGIGTQVVMASAEQVRQACIDDIGGILELIRPLEEQGILVRRSREQLEQEVERFTIIEKDGLIIGCAALYPYIDEHMAEMACVAIHPDYRDGNRGLLLLNYMKHRSKSIGIEQIFVLTTHSVHWFREQGFYEIGVDSLPMAKKSLYNYQRRSKILALPL.

One can recognise an N-acetyltransferase domain in the interval 299–438 (EQVRQACIDD…KSLYNYQRRS (140 aa)).

It belongs to the acetyltransferase family. ArgA subfamily.

It is found in the cytoplasm. The catalysed reaction is L-glutamate + acetyl-CoA = N-acetyl-L-glutamate + CoA + H(+). The protein operates within amino-acid biosynthesis; L-arginine biosynthesis; N(2)-acetyl-L-ornithine from L-glutamate: step 1/4. The chain is Amino-acid acetyltransferase (argA) from Vibrio vulnificus (strain CMCP6).